The following is a 204-amino-acid chain: CASP-like protein 2A1 (204 aa).

Over residues 1–11 (MEKSNDHDKAS) the composition is skewed to basic and acidic residues. Positions 1–25 (MEKSNDHDKASHGGSGGGATEKWEE) are disordered. At 1-32 (MEKSNDHDKASHGGSGGGATEKWEETSPGIRT) the chain is on the cytoplasmic side. Residues 33–53 (AETMLRLAPVGLCVAALVVML) form a helical membrane-spanning segment. Residues 54–74 (KDSETNEFGSISYSNLTAFRY) are Extracellular-facing. Residue N68 is glycosylated (N-linked (GlcNAc...) asparagine). A helical membrane pass occupies residues 75–95 (LVHANGICAGYSLLSAAIAAM). The Cytoplasmic portion of the chain corresponds to 96-113 (PRSSSTMPRVWTFFCLDQ). A helical transmembrane segment spans residues 114-134 (LLTYLVLAAGAVSAEVLYLAY). Over 135–155 (NGDSAITWSDACSSYGGFCHR) the chain is Extracellular. Residues 156–176 (ATASVIITFFVVCFYILLSLI) form a helical membrane-spanning segment. At 177–204 (SSYKLFTRFDPPSIVDSDKTLEVAVFGS) the chain is on the cytoplasmic side.

It belongs to the Casparian strip membrane proteins (CASP) family. In terms of assembly, homodimer and heterodimers.

It is found in the cell membrane. The sequence is that of CASP-like protein 2A1 from Arabidopsis lyrata subsp. lyrata (Lyre-leaved rock-cress).